Consider the following 377-residue polypeptide: MKILIDENMPYAEALFSQLGEVTMKSGRTLTADDLVDVDALMIRSVTKVNESLISKANKLKFVGTATAGMDHVDQELMKERGIFFTAAPGCNKVGVAEYAFSAMMVLAQQQGFSVFEKTVGIIGCGQVGSYLAKCLEGIGIKVLLNDPLKQQEGDTREFTELDTLLEQSDVITLHTPITKTGEFPTHHLINEQVLNNLRADQILINAARGPVVDNQALKARLQKADGFTAVLDVFEFEPEVDFELLPLLAFTTPHVAGYGLEGKARGTTMIFNSYCEFLGTEQRAYASDLLPTAPVPKMKLDRAWDEATLHNLTQLIYDVRKDDALFRRNISTPGSFDKMRKEYWDRREYSAVELTGDESCNLTPLSKLGFMVKPTL.

Residues S45 and T67 each contribute to the substrate site. NAD(+) contacts are provided by residues 127–128 (QV), D147, and T176. R209 is a catalytic residue. D233 is an NAD(+) binding site. E238 is a catalytic residue. H255 acts as the Proton donor in catalysis. G258 serves as a coordination point for NAD(+). A substrate-binding site is contributed by Y259.

This sequence belongs to the D-isomer specific 2-hydroxyacid dehydrogenase family. PdxB subfamily. As to quaternary structure, homodimer.

It localises to the cytoplasm. It catalyses the reaction 4-phospho-D-erythronate + NAD(+) = (R)-3-hydroxy-2-oxo-4-phosphooxybutanoate + NADH + H(+). It participates in cofactor biosynthesis; pyridoxine 5'-phosphate biosynthesis; pyridoxine 5'-phosphate from D-erythrose 4-phosphate: step 2/5. In terms of biological role, catalyzes the oxidation of erythronate-4-phosphate to 3-hydroxy-2-oxo-4-phosphonooxybutanoate. In Vibrio atlanticus (strain LGP32) (Vibrio splendidus (strain Mel32)), this protein is Erythronate-4-phosphate dehydrogenase.